The chain runs to 371 residues: Probable inactive methyltransferase Os04g0175900 (371 aa).

137-143 (LDVDEDN) provides a ligand contact to substrate. Residues 170–188 (LFEYMGTNHRFNMLFNQAM) form a substrate binding region. The S-adenosyl-L-methionine site is built by glycine 216, aspartate 239, methionine 260, and lysine 273.

This sequence belongs to the class I-like SAM-binding methyltransferase superfamily. Cation-independent O-methyltransferase family. COMT subfamily.

The sequence is that of Probable inactive methyltransferase Os04g0175900 from Oryza sativa subsp. japonica (Rice).